Reading from the N-terminus, the 594-residue chain is Probable glucose transporter rco-3 (594 aa).

The Cytoplasmic segment spans residues 1 to 13 (MAIFAMGWQKPDN). The helical transmembrane segment at 14-34 (VAGSSAPAIMVGLFVATGGLL) threads the bilayer. Topologically, residues 35 to 73 (LGYDTGTINGILAMKSFKDHFSTGYIDGNGQPGIYPKES) are extracellular. A helical transmembrane segment spans residues 74–94 (ALIVAMLSAGTAIGALLAAPL). The Cytoplasmic segment spans residues 95-103 (GDHYGRRRS). The helical transmembrane segment at 104 to 124 (LIGAIGIFVIGAILQVCAYNI) threads the bilayer. D125 is a topological domain (extracellular). The helical transmembrane segment at 126–146 (LLVAGRTVAGVGIGIVSVLVP) threads the bilayer. Topologically, residues 147-159 (LYQSEMAPKWIRG) are cytoplasmic. A helical membrane pass occupies residues 160–180 (TLVCTYQLSITMGLLAAAVVN). At 181-193 (ILTYKLKTAAAYR) the chain is on the extracellular side. A helical membrane pass occupies residues 194–214 (VPIGLQLTWACVLALGLTVLP). Over 215 to 293 (ETPRYLIKRG…TGCCLQMLQQ (79 aa)) the chain is Cytoplasmic. A helical transmembrane segment spans residues 294–314 (LTGVNFIMYYGTTFFNNAGVG). The Extracellular portion of the chain corresponds to 315–318 (NPFK). Residues 319 to 339 (ISLIMQVINTASTIPGLFVVE) traverse the membrane as a helical segment. Topologically, residues 340 to 345 (SWGRRR) are cytoplasmic. A helical transmembrane segment spans residues 346-366 (LLMVGAIGMAICQLLIAAFAT). The Extracellular segment spans residues 367-378 (ASGSNNLSAQNK). N372 carries an N-linked (GlcNAc...) asparagine glycan. Residues 379-403 (VLITFVAIYIFFFAASWGPVVWVVT) form a helical membrane-spanning segment. Residues 404–415 (SEIYPLKVRAKS) lie on the Cytoplasmic side of the membrane. A helical membrane pass occupies residues 416-436 (MSITTASNWFLNFGIAYGTPY). Over 437–454 (MQTNSAASDESSIDLGSK) the chain is Extracellular. Residues 455 to 475 (VFFVWGAFCIVAVGFVWCMVY) form a helical membrane-spanning segment. Over 476-594 (ETSKISLEQI…ASLGNIDLSY (119 aa)) the chain is Cytoplasmic. The interval 512–594 (DLGFSDGGIP…ASLGNIDLSY (83 aa)) is disordered. A compositionally biased stretch (low complexity) spans 524 to 576 (QQLQQQPQQPQQQQQQHHQQQQHQLQVDLQQSQSRTSNSSTSQTDTGGSNNTG).

The protein belongs to the major facilitator superfamily. Sugar transporter (TC 2.A.1.1) family.

The protein localises to the membrane. Its function is as follows. Probable glucose transporter. Involved in sugar transport, carbon catabolite repression, and initiation of conidiophore development. The protein is Probable glucose transporter rco-3 (rco-3) of Neurospora crassa (strain ATCC 24698 / 74-OR23-1A / CBS 708.71 / DSM 1257 / FGSC 987).